Consider the following 708-residue polypeptide: Ubiquitin thioesterase Zranb1 (708 aa).

A RanBP2-type 1 zinc finger spans residues 3 to 33; that stretch reads EHGIKWACEYCTYENWPSAIKCTMCRAQRPS. Cys10, Cys13, Cys24, and Cys27 together coordinate Zn(2+). Positions 38 to 73 are disordered; that stretch reads TEDPFKSGSSDVGRDWDPSSTEGGSSPLICPDSSAR. 2 consecutive RanBP2-type zinc fingers follow at residues 84–113 and 149–178; these read NANK…QRRT and RTQH…PRPN. Positions 90, 93, 104, 107, 155, 158, 169, and 172 each coordinate Zn(2+). The segment at 202-224 is disordered; that stretch reads RWRGGCSSGNSQRRSPPTTKRDS. Positions 209-219 are enriched in polar residues; it reads SGNSQRRSPPT. ANK repeat units lie at residues 260–290 and 313–340; these read KKTD…SGGD and YTLV…QQAA. An OTU domain is found at 432 to 592; sequence LYALWNRTAG…RGHFSALVAM (161 aa). Cys443 serves as the catalytic Nucleophile. Residue His585 is the Proton acceptor of the active site.

The protein belongs to the peptidase C64 family. Interacts with TRAF6. Interacts with APC.

The protein resides in the cytoplasm. It localises to the nucleus. The enzyme catalyses Thiol-dependent hydrolysis of ester, thioester, amide, peptide and isopeptide bonds formed by the C-terminal Gly of ubiquitin (a 76-residue protein attached to proteins as an intracellular targeting signal).. Its function is as follows. Ubiquitin thioesterase, which specifically hydrolyzes 'Lys-29'-linked and 'Lys-33'-linked diubiquitin. Also cleaves 'Lys-63'-linked chains, but with 40-fold less efficiency compared to 'Lys-29'-linked ones. Positive regulator of the Wnt signaling pathway that deubiquitinates APC protein, a negative regulator of Wnt-mediated transcription. Acts as a regulator of autophagy by mediating deubiquitination of PIK3C3/VPS34, thereby promoting autophagosome maturation. Plays a role in the regulation of cell morphology and cytoskeletal organization. Required in the stress fiber dynamics and cell migration. The sequence is that of Ubiquitin thioesterase Zranb1 from Mus musculus (Mouse).